Here is a 670-residue protein sequence, read N- to C-terminus: NADH-ubiquinone oxidoreductase chain 5 (670 aa).

Transmembrane regions (helical) follow at residues 3–23, 36–56, 76–96, 113–133, 136–156, 178–198, 218–238, 250–270, 283–303, 319–339, 340–360, 375–395, 425–445, 461–481, and 618–638; these read LLIV…GRFL, VSFS…GASA, FLFD…SSLV, FMCY…GDNF, LFLG…FWFT, LALG…STIF, ITLI…QIGL, TPVS…FMIA, LIVI…TGIL, LGYM…FHLM, NHAF…HAMS, FPLT…FPFL, VSVL…FLVP, IPMA…GYLA, and SGSV…FVTF.

This sequence belongs to the complex I subunit 5 family.

It localises to the mitochondrion inner membrane. It catalyses the reaction a ubiquinone + NADH + 5 H(+)(in) = a ubiquinol + NAD(+) + 4 H(+)(out). Core subunit of the mitochondrial membrane respiratory chain NADH dehydrogenase (Complex I) that is believed to belong to the minimal assembly required for catalysis. Complex I functions in the transfer of electrons from NADH to the respiratory chain. The immediate electron acceptor for the enzyme is believed to be ubiquinone. The sequence is that of NADH-ubiquinone oxidoreductase chain 5 (ND5) from Triticum aestivum (Wheat).